We begin with the raw amino-acid sequence, 424 residues long: Serine--tRNA ligase (424 aa).

Thr231–Glu233 contributes to the L-serine binding site. Arg262 to Glu264 serves as a coordination point for ATP. L-serine is bound at residue Glu285. ATP is bound at residue Glu349–Ser352. Residue Ser385 coordinates L-serine.

The protein belongs to the class-II aminoacyl-tRNA synthetase family. Type-1 seryl-tRNA synthetase subfamily. In terms of assembly, homodimer. The tRNA molecule binds across the dimer.

Its subcellular location is the cytoplasm. It carries out the reaction tRNA(Ser) + L-serine + ATP = L-seryl-tRNA(Ser) + AMP + diphosphate + H(+). The catalysed reaction is tRNA(Sec) + L-serine + ATP = L-seryl-tRNA(Sec) + AMP + diphosphate + H(+). The protein operates within aminoacyl-tRNA biosynthesis; selenocysteinyl-tRNA(Sec) biosynthesis; L-seryl-tRNA(Sec) from L-serine and tRNA(Sec): step 1/1. Its function is as follows. Catalyzes the attachment of serine to tRNA(Ser). Is also able to aminoacylate tRNA(Sec) with serine, to form the misacylated tRNA L-seryl-tRNA(Sec), which will be further converted into selenocysteinyl-tRNA(Sec). The sequence is that of Serine--tRNA ligase from Bacillus cereus (strain ATCC 10987 / NRS 248).